Reading from the N-terminus, the 423-residue chain is Probable sodium/metabolite cotransporter BASS4, chloroplastic (423 aa).

The transit peptide at 1-55 (MVTTHHLCLLRSTVLSVPVRLRAPRAPPHPRLPTASASASSYHGPTHLRRLRPLR) directs the protein to the chloroplast. The tract at residues 23–45 (APRAPPHPRLPTASASASSYHGP) is disordered. 9 helical membrane passes run 96–116 (FLPLALIAGIALALMDPTLGC), 123–140 (LSKYSTFGIFLISGLTLR), 153–173 (AGLFGLASILLFTPFLAQFIM), 182–202 (FITGLAMFCCMPTTLSSGVTL), 212–232 (LALAMTAISNLLGIMIVPLSL), 244–264 (LPTEKLFKSLVTTLLIPIILG), 284–301 (GFSVTSAILLSLVPWIQV), 315–335 (AFAVAVTVGVLLHFALLAFNA), and 389–409 (LLVIPCVAAHINQIIIDSIIV).

The protein belongs to the bile acid:sodium symporter (BASS) (TC 2.A.28) family.

The protein resides in the membrane. It localises to the plastid. It is found in the chloroplast envelope. Functionally, may function as sodium-coupled metabolite transporter across the chloroplast envelope. The polypeptide is Probable sodium/metabolite cotransporter BASS4, chloroplastic (BASS4) (Oryza sativa subsp. indica (Rice)).